A 97-amino-acid chain; its full sequence is Putative ankyrin repeat protein RBE_0357 (97 aa).

An ANK repeat occupies tyrosine 24–isoleucine 54.

The protein is Putative ankyrin repeat protein RBE_0357 of Rickettsia bellii (strain RML369-C).